Here is a 373-residue protein sequence, read N- to C-terminus: Enoyl-[acyl-carrier-protein] reductase, mitochondrial (373 aa).

The N-terminal 53 residues, 1 to 53 (MWVCSTLWRVRTPARQWRGLLPASGCHGPAASSYSASAEPARVRALVYGHHGD), are a transit peptide targeting the mitochondrion. The residue at position 61 (lysine 61) is an N6-acetyllysine; alternate. An N6-succinyllysine; alternate modification is found at lysine 61. Tyrosine 94 functions as the Proton donor in the catalytic mechanism. NADP(+) is bound by residues asparagine 167, 193 to 196 (NSGV), and 216 to 218 (RDR). N6-acetyllysine; alternate is present on residues lysine 252 and lysine 267. Lysine 252 and lysine 267 each carry N6-succinyllysine; alternate. NADP(+) contacts are provided by residues 285 to 288 (YGGM) and 310 to 312 (FWL). The residue at position 316 (lysine 316) is an N6-succinyllysine. Lysine 368 is an NADP(+) binding site.

Belongs to the zinc-containing alcohol dehydrogenase family. Quinone oxidoreductase subfamily. In terms of assembly, homodimer. Isoform 2 interacts with PPARA in the nucleus and increases its activity. In terms of tissue distribution, highly expressed in skeletal and heart muscle. Expressed at lower level in placenta, liver, kidney and pancreas. Weakly or not expressed in lung.

The protein localises to the mitochondrion. The protein resides in the cytoplasm. It is found in the nucleus. The enzyme catalyses a 2,3-saturated acyl-[ACP] + NADP(+) = a (2E)-enoyl-[ACP] + NADPH + H(+). It catalyses the reaction (2E)-butenoyl-[ACP] + NADPH + H(+) = butanoyl-[ACP] + NADP(+). The catalysed reaction is (2E)-hexenoyl-[ACP] + NADPH + H(+) = hexanoyl-[ACP] + NADP(+). It carries out the reaction (2E)-octenoyl-[ACP] + NADPH + H(+) = octanoyl-[ACP] + NADP(+). The enzyme catalyses (2E)-decenoyl-[ACP] + NADPH + H(+) = decanoyl-[ACP] + NADP(+). It catalyses the reaction (2E)-dodecenoyl-[ACP] + NADPH + H(+) = dodecanoyl-[ACP] + NADP(+). The catalysed reaction is (2E)-tetradecenoyl-[ACP] + NADPH + H(+) = tetradecanoyl-[ACP] + NADP(+). It carries out the reaction (2E)-hexadecenoyl-[ACP] + NADPH + H(+) = hexadecanoyl-[ACP] + NADP(+). Its function is as follows. Catalyzes the NADPH-dependent reduction of trans-2-enoyl thioesters in mitochondrial fatty acid synthesis (fatty acid synthesis type II). Fatty acid chain elongation in mitochondria uses acyl carrier protein (ACP) as an acyl group carrier, but the enzyme accepts both ACP and CoA thioesters as substrates in vitro. Displays a preference for medium-chain over short- and long-chain substrates. May provide the octanoyl chain used for lipoic acid biosynthesis, regulating protein lipoylation and mitochondrial respiratory activity particularly in Purkinje cells. Involved in iron homeostasis; affecting Fe-S cluster assembly and ceramide metabolism. Required for proper morphology and bioenergetic functions of mitochondria. Required for maintenance of neurons. This chain is Enoyl-[acyl-carrier-protein] reductase, mitochondrial (MECR), found in Homo sapiens (Human).